A 556-amino-acid polypeptide reads, in one-letter code: ATP synthase subunit beta-1, mitochondrial (556 aa).

Positions 1–20 (MASRRVLSSLLRSSSGRSAA) are enriched in low complexity. Residues 1-37 (MASRRVLSSLLRSSSGRSAAKLGNRNPRLPSPSPARH) are disordered. The N-terminal 51 residues, 1–51 (MASRRVLSSLLRSSSGRSAAKLGNRNPRLPSPSPARHAAPCSYLLGRVAEY), are a transit peptide targeting the mitochondrion. S59 is modified (phosphoserine). An ATP-binding site is contributed by 231 to 238 (GGAGVGKT).

It belongs to the ATPase alpha/beta chains family. In terms of assembly, F-type ATPases have 2 components, CF(1) - the catalytic core - and CF(0) - the membrane proton channel. CF(1) has five subunits: alpha(3), beta(3), gamma(1), delta(1), epsilon(1). CF(0) has three main subunits: a, b and c.

It localises to the mitochondrion. Its subcellular location is the mitochondrion inner membrane. It carries out the reaction ATP + H2O + 4 H(+)(in) = ADP + phosphate + 5 H(+)(out). Its function is as follows. Mitochondrial membrane ATP synthase (F(1)F(0) ATP synthase or Complex V) produces ATP from ADP in the presence of a proton gradient across the membrane which is generated by electron transport complexes of the respiratory chain. F-type ATPases consist of two structural domains, F(1) - containing the extramembraneous catalytic core, and F(0) - containing the membrane proton channel, linked together by a central stalk and a peripheral stalk. During catalysis, ATP synthesis in the catalytic domain of F(1) is coupled via a rotary mechanism of the central stalk subunits to proton translocation. Subunits alpha and beta form the catalytic core in F(1). Rotation of the central stalk against the surrounding alpha(3)beta(3) subunits leads to hydrolysis of ATP in three separate catalytic sites on the beta subunits. The chain is ATP synthase subunit beta-1, mitochondrial from Arabidopsis thaliana (Mouse-ear cress).